An 839-amino-acid chain; its full sequence is MYVHVRVGMDVAAHHHHHQQLRRERHFIQSVSSSNANGTATDPSQDDMAIVHEPQPQPQPQPEPQPQPQPEPEEEAPQKRAKKCTSDVWQHFTKKEIEVEVDGKKYVQVWGHCNFPNCKAKYRAEGHHGTSGFRNHLRTSHSLVKGQLCLKSEKDHGKDINLIEPYKYDEVVSLKKLHLAIIMHEYPFNIVEHEYFVEFVKSLRPHFPIKSRVTARKYIMDLYLEEKEKLYGKLKDVQSRFSTTMDMWTSCQNKSYMCVTIHWIDDDWCLQKRIVGFFHVEGRHTGQRLSQTFTAIMVKWNIEKKLFALSLDNASANEVAVHDIIEDLQDTDSNLVCDGAFFHVRCACHILNLVAKDGLAVIAGTIEKIKAIVLAVKSSPLQWEELMKCASECDLDKSKGISYDVSTRWNSTYLMLRDALYYKPALIRLKTSDPRRYVCLNCCTCHHYKFSINQMSIIVGTMQFVLKPRSGRWHLTLFKCLKKFFDLTELLSGTQYSTANLFYKGFCEIKDLIDQWCCHEKFVIRRMAVAMSEKFEKYWKVSNIALAVACFLDPRYKKILIEFYMKKFHGDSYKVHVDDFVRVIRKLYQFYSSCSPSAPKTKTTTNDSMDDTLMENEDDEFQNYLHELKDYDQVESNELDKYMSEPLLKHSGQFDILSWWRGRVAEYPILTQIARDVLAIQVSTVASESAFSAGGRVVDPYRNRLGSEIVEALICTKDWVAASRKGEWHICYNEVPIYSYSTIILLILMHICVIQGATYFPTMIGDLEVLDSVIAAATNHENHMDEVFKDYYLLRAWAINLLLFTTVLMHGLFLSPCFDACALLPSRVILPAWLALTDF.

Positions 32–43 are enriched in polar residues; that stretch reads SSSNANGTATDP. The segment at 32–85 is disordered; it reads SSSNANGTATDPSQDDMAIVHEPQPQPQPQPEPQPQPQPEPEEEAPQKRAKKCT. Residues 55 to 70 are compositionally biased toward pro residues; that stretch reads QPQPQPQPEPQPQPQP.

In Zea mays (Maize), this protein is Putative AC9 transposase.